A 61-amino-acid chain; its full sequence is UPF0434 protein PA14_25520 (61 aa).

The protein belongs to the UPF0434 family.

The polypeptide is UPF0434 protein PA14_25520 (Pseudomonas aeruginosa (strain UCBPP-PA14)).